A 576-amino-acid polypeptide reads, in one-letter code: Arginine--tRNA ligase (576 aa).

The short motif at 126-136 is the 'HIGH' region element; the sequence is ANPTGPMHIGH.

This sequence belongs to the class-I aminoacyl-tRNA synthetase family. As to quaternary structure, monomer.

The protein localises to the cytoplasm. The enzyme catalyses tRNA(Arg) + L-arginine + ATP = L-arginyl-tRNA(Arg) + AMP + diphosphate. The chain is Arginine--tRNA ligase (argS) from Rickettsia prowazekii (strain Madrid E).